A 383-amino-acid chain; its full sequence is Dual-specificity RNA methyltransferase RlmN (383 aa).

The Proton acceptor role is filled by glutamate 95. The 249-residue stretch at 101-349 folds into the Radical SAM core domain; the sequence is EETRGTLCVS…TTVRKTRGDD (249 aa). Cysteine 108 and cysteine 354 are oxidised to a cystine. [4Fe-4S] cluster contacts are provided by cysteine 115, cysteine 119, and cysteine 122. S-adenosyl-L-methionine contacts are provided by residues 180 to 181, serine 212, 234 to 236, and asparagine 311; these read GE and SLH. Cysteine 354 acts as the S-methylcysteine intermediate in catalysis.

Belongs to the radical SAM superfamily. RlmN family. The cofactor is [4Fe-4S] cluster.

Its subcellular location is the cytoplasm. It carries out the reaction adenosine(2503) in 23S rRNA + 2 reduced [2Fe-2S]-[ferredoxin] + 2 S-adenosyl-L-methionine = 2-methyladenosine(2503) in 23S rRNA + 5'-deoxyadenosine + L-methionine + 2 oxidized [2Fe-2S]-[ferredoxin] + S-adenosyl-L-homocysteine. It catalyses the reaction adenosine(37) in tRNA + 2 reduced [2Fe-2S]-[ferredoxin] + 2 S-adenosyl-L-methionine = 2-methyladenosine(37) in tRNA + 5'-deoxyadenosine + L-methionine + 2 oxidized [2Fe-2S]-[ferredoxin] + S-adenosyl-L-homocysteine. Functionally, specifically methylates position 2 of adenine 2503 in 23S rRNA and position 2 of adenine 37 in tRNAs. m2A2503 modification seems to play a crucial role in the proofreading step occurring at the peptidyl transferase center and thus would serve to optimize ribosomal fidelity. This Paraburkholderia phytofirmans (strain DSM 17436 / LMG 22146 / PsJN) (Burkholderia phytofirmans) protein is Dual-specificity RNA methyltransferase RlmN.